The chain runs to 379 residues: Chaperone protein DnaJ (379 aa).

Positions 5-70 (DYYEVLGVEK…QKRAAYDQYG (66 aa)) constitute a J domain. The segment at 133-211 (GKSVEIRVPT…CHGQGRVEKT (79 aa)) adopts a CR-type zinc-finger fold. Positions 146, 149, 163, 166, 185, 188, 199, and 202 each coordinate Zn(2+). 4 CXXCXGXG motif repeats span residues 146–153 (CDTCDGSG), 163–170 (CTTCHGQG), 185–192 (CPTCGGKG), and 199–206 (CDVCHGQG).

Belongs to the DnaJ family. In terms of assembly, homodimer. Requires Zn(2+) as cofactor.

It localises to the cytoplasm. Participates actively in the response to hyperosmotic and heat shock by preventing the aggregation of stress-denatured proteins and by disaggregating proteins, also in an autonomous, DnaK-independent fashion. Unfolded proteins bind initially to DnaJ; upon interaction with the DnaJ-bound protein, DnaK hydrolyzes its bound ATP, resulting in the formation of a stable complex. GrpE releases ADP from DnaK; ATP binding to DnaK triggers the release of the substrate protein, thus completing the reaction cycle. Several rounds of ATP-dependent interactions between DnaJ, DnaK and GrpE are required for fully efficient folding. Also involved, together with DnaK and GrpE, in the DNA replication of plasmids through activation of initiation proteins. The protein is Chaperone protein DnaJ of Pseudoalteromonas atlantica (strain T6c / ATCC BAA-1087).